Reading from the N-terminus, the 196-residue chain is dITP/XTP pyrophosphatase (196 aa).

Residue 7–12 participates in substrate binding; the sequence is TGNAGK. Residues E39 and D68 each contribute to the Mg(2+) site. Catalysis depends on D68, which acts as the Proton acceptor. Residues S69, 153-156, K176, and 181-182 contribute to the substrate site; these read HGYD and HR.

Belongs to the HAM1 NTPase family. In terms of assembly, homodimer. It depends on Mg(2+) as a cofactor.

It catalyses the reaction XTP + H2O = XMP + diphosphate + H(+). The catalysed reaction is dITP + H2O = dIMP + diphosphate + H(+). The enzyme catalyses ITP + H2O = IMP + diphosphate + H(+). Functionally, pyrophosphatase that catalyzes the hydrolysis of nucleoside triphosphates to their monophosphate derivatives, with a high preference for the non-canonical purine nucleotides XTP (xanthosine triphosphate), dITP (deoxyinosine triphosphate) and ITP. Seems to function as a house-cleaning enzyme that removes non-canonical purine nucleotides from the nucleotide pool, thus preventing their incorporation into DNA/RNA and avoiding chromosomal lesions. This Thioalkalivibrio sulfidiphilus (strain HL-EbGR7) protein is dITP/XTP pyrophosphatase.